Consider the following 71-residue polypeptide: Large ribosomal subunit protein bL31 (71 aa).

4 residues coordinate Zn(2+): Cys-16, Cys-18, Cys-36, and Cys-39.

This sequence belongs to the bacterial ribosomal protein bL31 family. Type A subfamily. As to quaternary structure, part of the 50S ribosomal subunit. Zn(2+) is required as a cofactor.

Functionally, binds the 23S rRNA. The chain is Large ribosomal subunit protein bL31 from Petrotoga mobilis (strain DSM 10674 / SJ95).